Reading from the N-terminus, the 208-residue chain is Small ribosomal subunit protein uS4 (208 aa).

One can recognise an S4 RNA-binding domain in the interval 98 to 159 (RRLDNVAYRL…KSRKVAAISE (62 aa)).

It belongs to the universal ribosomal protein uS4 family. As to quaternary structure, part of the 30S ribosomal subunit. Contacts protein S5. The interaction surface between S4 and S5 is involved in control of translational fidelity.

Its function is as follows. One of the primary rRNA binding proteins, it binds directly to 16S rRNA where it nucleates assembly of the body of the 30S subunit. With S5 and S12 plays an important role in translational accuracy. The polypeptide is Small ribosomal subunit protein uS4 (Geobacter sp. (strain M21)).